A 110-amino-acid polypeptide reads, in one-letter code: Large ribosomal subunit protein uL22 (110 aa).

Belongs to the universal ribosomal protein uL22 family. In terms of assembly, part of the 50S ribosomal subunit.

This protein binds specifically to 23S rRNA; its binding is stimulated by other ribosomal proteins, e.g. L4, L17, and L20. It is important during the early stages of 50S assembly. It makes multiple contacts with different domains of the 23S rRNA in the assembled 50S subunit and ribosome. Functionally, the globular domain of the protein is located near the polypeptide exit tunnel on the outside of the subunit, while an extended beta-hairpin is found that lines the wall of the exit tunnel in the center of the 70S ribosome. In Vibrio cholerae serotype O1 (strain ATCC 39541 / Classical Ogawa 395 / O395), this protein is Large ribosomal subunit protein uL22.